Here is a 468-residue protein sequence, read N- to C-terminus: Abscisic acid 8'-hydroxylase 4 (468 aa).

Residues Ile-4–Ser-24 traverse the membrane as a helical segment. Cys-415 lines the heme pocket.

Belongs to the cytochrome P450 family. Heme serves as cofactor. As to expression, mainly expressed in flowers. Lower expression in siliques, rosette leaves, roots and stems. Not expressed in dry seeds. Expressed in silique envelopes, but not in embryo or endosperm during the seed development.

Its subcellular location is the membrane. The catalysed reaction is 2-cis-(+)-abscisate + reduced [NADPH--hemoprotein reductase] + O2 = (+)-8'-hydroxyabscisate + oxidized [NADPH--hemoprotein reductase] + H2O + H(+). Its pathway is plant hormone degradation; abscisic acid degradation. Its function is as follows. Involved in the oxidative degradation of abscisic acid, but not in the isomerization of the produced 8'-hydroxyabscisic acid (8'-OH-ABA) to (-)-phaseic acid (PA). This Arabidopsis thaliana (Mouse-ear cress) protein is Abscisic acid 8'-hydroxylase 4 (CYP707A4).